The chain runs to 292 residues: uncharacterized protein (292 aa).

A helical transmembrane segment spans residues 13 to 35 (LFILFIIVVCIYLLPRVAINAFY).

Belongs to the serine esterase family.

It is found in the membrane. This is an uncharacterized protein from Salmonella typhi.